Consider the following 152-residue polypeptide: Lipoprotein signal peptidase (152 aa).

2 helical membrane passes run 55–75 (NKMWFFYIITVIFVAFIVFYM) and 85–105 (LGISLGLILGGAIGNFIDRVF). Catalysis depends on residues Asp111 and Asp129. The chain crosses the membrane as a helical span at residues 124–144 (VFNIADSALCIGVVLIIIQTV).

This sequence belongs to the peptidase A8 family.

Its subcellular location is the cell membrane. The catalysed reaction is Release of signal peptides from bacterial membrane prolipoproteins. Hydrolyzes -Xaa-Yaa-Zaa-|-(S,diacylglyceryl)Cys-, in which Xaa is hydrophobic (preferably Leu), and Yaa (Ala or Ser) and Zaa (Gly or Ala) have small, neutral side chains.. It functions in the pathway protein modification; lipoprotein biosynthesis (signal peptide cleavage). This protein specifically catalyzes the removal of signal peptides from prolipoproteins. This Bacillus mycoides (strain KBAB4) (Bacillus weihenstephanensis) protein is Lipoprotein signal peptidase.